Consider the following 270-residue polypeptide: Large ribosomal subunit protein uL2c (270 aa).

The tract at residues 221 to 245 (NPIDHPHGGGEGRAPIGRNQPKTPW) is disordered.

This sequence belongs to the universal ribosomal protein uL2 family. As to quaternary structure, part of the 50S ribosomal subunit.

The protein localises to the plastid. The polypeptide is Large ribosomal subunit protein uL2c (rpl2) (Cuscuta gronovii (Common dodder)).